The sequence spans 714 residues: Fatty acid oxidation complex subunit alpha (714 aa).

The tract at residues 1–190 (MEMASAFTLN…KLGLVDDVVP (190 aa)) is enoyl-CoA hydratase. The segment at 306–714 (APLNSVGILG…FWKTTATDLQ (409 aa)) is 3-hydroxyacyl-CoA dehydrogenase.

It in the N-terminal section; belongs to the enoyl-CoA hydratase/isomerase family. In the central section; belongs to the 3-hydroxyacyl-CoA dehydrogenase family. In terms of assembly, heterotetramer of two alpha chains (FadJ) and two beta chains (FadI).

It is found in the cytoplasm. The catalysed reaction is a (3S)-3-hydroxyacyl-CoA = a (2E)-enoyl-CoA + H2O. It catalyses the reaction a 4-saturated-(3S)-3-hydroxyacyl-CoA = a (3E)-enoyl-CoA + H2O. The enzyme catalyses a (3S)-3-hydroxyacyl-CoA + NAD(+) = a 3-oxoacyl-CoA + NADH + H(+). It carries out the reaction (3S)-3-hydroxybutanoyl-CoA = (3R)-3-hydroxybutanoyl-CoA. Its pathway is lipid metabolism; fatty acid beta-oxidation. In terms of biological role, catalyzes the formation of a hydroxyacyl-CoA by addition of water on enoyl-CoA. Also exhibits 3-hydroxyacyl-CoA epimerase and 3-hydroxyacyl-CoA dehydrogenase activities. The sequence is that of Fatty acid oxidation complex subunit alpha from Shigella boydii serotype 4 (strain Sb227).